We begin with the raw amino-acid sequence, 234 residues long: NAD-dependent protein deacylase (234 aa).

Residues 1–234 (MKNLVVLTGA…ELKQLLIPAP (234 aa)) form the Deacetylase sirtuin-type domain. 9-28 (GAGMSAESGISTFRDAGGLW) provides a ligand contact to NAD(+). The substrate site is built by Tyr-53 and Arg-56. Residue 86-89 (QNVD) participates in NAD(+) binding. His-104 (proton acceptor) is an active-site residue. 175-177 (GTS) provides a ligand contact to NAD(+).

Belongs to the sirtuin family. Class III subfamily.

It localises to the cytoplasm. It catalyses the reaction N(6)-acetyl-L-lysyl-[protein] + NAD(+) + H2O = 2''-O-acetyl-ADP-D-ribose + nicotinamide + L-lysyl-[protein]. It carries out the reaction N(6)-succinyl-L-lysyl-[protein] + NAD(+) + H2O = 2''-O-succinyl-ADP-D-ribose + nicotinamide + L-lysyl-[protein]. In terms of biological role, NAD-dependent lysine deacetylase and desuccinylase that specifically removes acetyl and succinyl groups on target proteins. Modulates the activities of several proteins which are inactive in their acylated form. This is NAD-dependent protein deacylase from Bacteroides thetaiotaomicron (strain ATCC 29148 / DSM 2079 / JCM 5827 / CCUG 10774 / NCTC 10582 / VPI-5482 / E50).